A 614-amino-acid chain; its full sequence is Zinc metalloproteinase-disintegrin-like HR1b (614 aa).

The first 20 residues, 1 to 20 (MIQVLLVTICLAVFPYQGSS), serve as a signal peptide directing secretion. Residues 21 to 191 (IILESGNVND…KASKLVVTAE (171 aa)) constitute a propeptide that is removed on maturation. At Q192 the chain carries Pyrrolidone carboxylic acid. One can recognise a Peptidase M12B domain in the interval 198 to 394 (RYIKLAIVVD…HKPQCILNAP (197 aa)). The N-linked (GlcNAc...) asparagine glycan is linked to N264. Disulfide bonds link C309–C389, C349–C373, and C351–C356. Residue H334 coordinates Zn(2+). E335 is a catalytic residue. Positions 338 and 344 each coordinate Zn(2+). The N-linked (GlcNAc...) asparagine glycan is linked to N372. Positions 395-398 (SKTD) are excised as a propeptide. The Disintegrin domain maps to 402 to 488 (PPVCGNELLE…DCPTDRFHRN (87 aa)). Ca(2+) is bound by residues V404, N407, L409, E411, E414, and D417. Cystine bridges form between C405-C424, C405-C434, C416-C429, C416-C434, C418-C424, C428-C451, C442-C448, C447-C473, C460-C480, C467-C492, C467-C499, C492-C504, C499-C504, C511-C526, C511-C561, C526-C568, C539-C549, C549-C556, C556-C593, C561-C568, C587-C598, and C593-C598. Positions 466-468 (ECD) match the D/ECD-tripeptide motif. N518 carries an N-linked (GlcNAc...) asparagine glycan. A glycan (N-linked (GlcNAc...) asparagine) is linked at N571. Positions 608-614 (TTVFSLI) are excised as a propeptide.

It belongs to the venom metalloproteinase (M12B) family. P-III subfamily. P-IIIb sub-subfamily. As to quaternary structure, monomer. It depends on Zn(2+) as a cofactor. Expressed by the venom gland.

It localises to the secreted. Zinc protease that induces hemorrhage. Has preference for Tyr, Leu, Arg, Met, and Phe at the P1 position, in descending order (in vitro). Shows equal preference for the sequences of Ala-Asp and Arg-Ile at the P3-P2 position with different enzyme cleavage sites across the P1 position: the N-terminus side for Ala-Asp and the C-terminus side for Arg-Ile. In terms of biological role, inhibits platelet aggregation induced by ADP, thrombin, platelet-activating factor and collagen. Acts by inhibiting fibrinogen interaction with platelet receptors alpha-IIb/beta-3 (ITGA2B/ITGB3). The sequence is that of Zinc metalloproteinase-disintegrin-like HR1b from Protobothrops flavoviridis (Habu).